We begin with the raw amino-acid sequence, 205 residues long: Ribosomal RNA small subunit methyltransferase G (205 aa).

S-adenosyl-L-methionine is bound by residues G71, F76, 120–121 (IE), and R134.

Belongs to the methyltransferase superfamily. RNA methyltransferase RsmG family.

Its subcellular location is the cytoplasm. It catalyses the reaction guanosine(527) in 16S rRNA + S-adenosyl-L-methionine = N(7)-methylguanosine(527) in 16S rRNA + S-adenosyl-L-homocysteine. Its function is as follows. Specifically methylates the N7 position of guanine in position 527 of 16S rRNA. The polypeptide is Ribosomal RNA small subunit methyltransferase G (Paramagnetospirillum magneticum (strain ATCC 700264 / AMB-1) (Magnetospirillum magneticum)).